A 271-amino-acid polypeptide reads, in one-letter code: Inactive phospholipid phosphatase 7 (271 aa).

Residues 1–69 (MPVSQSRARA…RQSQQLPEED (69 aa)) form a disordered region. The Cytoplasmic portion of the chain corresponds to 1-112 (MPVSQSRARA…AASWASARSM (112 aa)). The span at 24 to 36 (SLNQPPKGTQEPR) shows a compositional bias: polar residues. Ser-43 and Ser-62 each carry phosphoserine. An interaction with MTOR region spans residues 70 to 91 (CMQLNPSFKGIAFNSLLAIDIC). Residues 113 to 133 (VKLIGITSHGIPWIGGTILCL) traverse the membrane as a helical segment. Residues 134–141 (VRSSTLAG) are Extracellular-facing. Residues 142–162 (QEVLMNLLLALLLDIMTVAGV) traverse the membrane as a helical segment. At 163 to 202 (QKLIKRRGPYETSPGLLDYLTMDIYAFPAGHASRAAMVSK) the chain is on the cytoplasmic side. Residues 203–223 (FFLSHLVLAVPLRVLLVLWAF) traverse the membrane as a helical segment. Topologically, residues 224-239 (CVGLSRVMIGRHHITD) are extracellular. A helical transmembrane segment spans residues 240-260 (VISGFIIGYFQFRLVELVWMS). The Cytoplasmic portion of the chain corresponds to 261 to 271 (SNTCQMLISAW).

It belongs to the PA-phosphatase related phosphoesterase family. Homo- and heterooligomer. Interacts with MTOR; controls MTOR-dependent IGF2 expression during myoblast differentiation.

The protein localises to the nucleus envelope. It localises to the endoplasmic reticulum membrane. It is found in the membrane. In terms of biological role, plays a role as negative regulator of myoblast differentiation, in part through effects on MTOR signaling. Has no detectable enzymatic activity. The protein is Inactive phospholipid phosphatase 7 of Rattus norvegicus (Rat).